The following is a 156-amino-acid chain: Small ribosomal subunit protein uS7 (156 aa).

Belongs to the universal ribosomal protein uS7 family. As to quaternary structure, part of the 30S ribosomal subunit. Contacts proteins S9 and S11.

Functionally, one of the primary rRNA binding proteins, it binds directly to 16S rRNA where it nucleates assembly of the head domain of the 30S subunit. Is located at the subunit interface close to the decoding center, probably blocks exit of the E-site tRNA. This Aeromonas hydrophila subsp. hydrophila (strain ATCC 7966 / DSM 30187 / BCRC 13018 / CCUG 14551 / JCM 1027 / KCTC 2358 / NCIMB 9240 / NCTC 8049) protein is Small ribosomal subunit protein uS7.